The sequence spans 31 residues: Glucagon-3 (31 aa).

Belongs to the glucagon family.

The protein resides in the secreted. Its function is as follows. Glucagon plays a key role in glucose metabolism and homeostasis. Regulates blood glucose by increasing gluconeogenesis and decreasing glycolysis. This chain is Glucagon-3, found in Huso dauricus (Kaluga sturgeon).